A 389-amino-acid polypeptide reads, in one-letter code: MNLHEYQAKQLFADYGLPVPSGIPCSSADEAVAATKKLGGDKWVVKCQVHAGGRGKAGGVKVAGSEQEVRAFADQWLGKRLVTYQTDANGQPVNTILVETCGNIAKELYLGAVIDRSSRRVVFMASTEGGMDIETVAHNTPELIHKAALDPLTGPQPYQARELGFKLGLNAEQLKQFTKIFLGLGKMFVACDLSLLEINPLVITGEGNLLCLDGKINIDSNALYRQPKLKAWNDETQEDPREVEAARWDLNYVALDGNIGCMVNGAGLAMGTMDIIKHHGGFPANFLDVGGGATKERVTEAFKLILSDSKVKAVLVNIFGGIVRCDLIADGVIGAVAEVGVKVPVVVRLEGNNADLGSKKLAESGLNIIAATSLTDAAEQVVKAAEAVA.

The 236-residue stretch at 9–244 folds into the ATP-grasp domain; it reads KQLFADYGLP…ETQEDPREVE (236 aa). ATP is bound by residues lysine 46, 53-55, glutamate 99, glycine 102, and glutamate 107; that span reads GRG. Mg(2+)-binding residues include asparagine 199 and aspartate 213. Substrate contacts are provided by residues asparagine 264 and 321 to 323; that span reads GIV.

Belongs to the succinate/malate CoA ligase beta subunit family. Heterotetramer of two alpha and two beta subunits. Mg(2+) serves as cofactor.

It carries out the reaction succinate + ATP + CoA = succinyl-CoA + ADP + phosphate. The enzyme catalyses GTP + succinate + CoA = succinyl-CoA + GDP + phosphate. Its pathway is carbohydrate metabolism; tricarboxylic acid cycle; succinate from succinyl-CoA (ligase route): step 1/1. In terms of biological role, succinyl-CoA synthetase functions in the citric acid cycle (TCA), coupling the hydrolysis of succinyl-CoA to the synthesis of either ATP or GTP and thus represents the only step of substrate-level phosphorylation in the TCA. The beta subunit provides nucleotide specificity of the enzyme and binds the substrate succinate, while the binding sites for coenzyme A and phosphate are found in the alpha subunit. The protein is Succinate--CoA ligase [ADP-forming] subunit beta of Tolumonas auensis (strain DSM 9187 / NBRC 110442 / TA 4).